Reading from the N-terminus, the 79-residue chain is Tau-theraphotoxin-Hs1a (79 aa).

6 disulfide bridges follow: cysteine 2/cysteine 16, cysteine 9/cysteine 23, cysteine 15/cysteine 31, cysteine 44/cysteine 58, cysteine 51/cysteine 63, and cysteine 57/cysteine 71. Domain repeat units lie at residues 2 to 31 and 42 to 71; these read CAKE…IPHC and TNCA…IPYC. Residues 2-71 are 2 X approximate repeats with cysteine pattern C-C-CC-C-C; the sequence is CAKEGEVCSW…DCPLAFIPYC (70 aa).

Belongs to the neurotoxin 23 family. Double-knot toxin subfamily. As to quaternary structure, interacts with TRPV1 (2 toxins (4 moieties) bind 1 channel (homotetramer)). As to expression, expressed by the venom gland.

It localises to the secreted. Selectively activates the heat-activated TRPV1 channel. It binds to TRPV1 in an open state-dependent manner, trapping it there to produce irreversible currents. It binds to the outer edge of the external pore of TRPV1 in a counterclockwise configuration, using a limited protein-protein interface and inserting hydrophobic residues into the bilayer. It also partitions naturally into membranes, with the two lobes exhibiting opposing energetics for membrane partitioning (K1) and channel activation (K2). In addition, the toxin disrupts a cluster of hydrophobic residues behind the selectivity filter that are critical for channel activation. The chain is Tau-theraphotoxin-Hs1a from Cyriopagopus schmidti (Chinese bird spider).